A 363-amino-acid chain; its full sequence is Phosphoserine aminotransferase (363 aa).

Arg-42 is a binding site for L-glutamate. Residues 76–77 (AR), Trp-104, Thr-155, Asp-175, and Gln-198 contribute to the pyridoxal 5'-phosphate site. An N6-(pyridoxal phosphate)lysine modification is found at Lys-199. 240–241 (NT) contacts pyridoxal 5'-phosphate.

The protein belongs to the class-V pyridoxal-phosphate-dependent aminotransferase family. SerC subfamily. As to quaternary structure, homodimer. It depends on pyridoxal 5'-phosphate as a cofactor.

The protein localises to the cytoplasm. It catalyses the reaction O-phospho-L-serine + 2-oxoglutarate = 3-phosphooxypyruvate + L-glutamate. The catalysed reaction is 4-(phosphooxy)-L-threonine + 2-oxoglutarate = (R)-3-hydroxy-2-oxo-4-phosphooxybutanoate + L-glutamate. It participates in amino-acid biosynthesis; L-serine biosynthesis; L-serine from 3-phospho-D-glycerate: step 2/3. The protein operates within cofactor biosynthesis; pyridoxine 5'-phosphate biosynthesis; pyridoxine 5'-phosphate from D-erythrose 4-phosphate: step 3/5. Catalyzes the reversible conversion of 3-phosphohydroxypyruvate to phosphoserine and of 3-hydroxy-2-oxo-4-phosphonooxybutanoate to phosphohydroxythreonine. The chain is Phosphoserine aminotransferase (serC) from Edwardsiella ictaluri (strain 93-146).